The sequence spans 122 residues: Large ribosomal subunit protein uL14 (122 aa).

Belongs to the universal ribosomal protein uL14 family. In terms of assembly, part of the 50S ribosomal subunit. Forms a cluster with proteins L3 and L19. In the 70S ribosome, L14 and L19 interact and together make contacts with the 16S rRNA in bridges B5 and B8.

Binds to 23S rRNA. Forms part of two intersubunit bridges in the 70S ribosome. In Maricaulis maris (strain MCS10) (Caulobacter maris), this protein is Large ribosomal subunit protein uL14.